The chain runs to 558 residues: Putative polypeptide N-acetylgalactosaminyltransferase 13 (558 aa).

The Cytoplasmic portion of the chain corresponds to 1–12 (MHAGGKYCGPRH). Residues 13-32 (CSFYIIAFLICQLFFLVIFI) form a helical; Signal-anchor for type II membrane protein membrane-spanning segment. The Lumenal segment spans residues 33–558 (RNDDASSANE…QFALEMEGQT (526 aa)). 2 N-linked (GlcNAc...) asparagine glycosylation sites follow: Asn48 and Asn111. 4 disulfides stabilise this stretch: Cys97/Cys335, Cys326/Cys412, Cys445/Cys460, and Cys484/Cys498. The tract at residues 109 to 225 (EANVSVVISF…EGWLEPLLER (117 aa)) is catalytic subdomain A. Residues Asp150 and Arg186 each contribute to the substrate site. Residue Asp209 participates in Mn(2+) binding. Ser210 provides a ligand contact to substrate. His211 serves as a coordination point for Mn(2+). The tract at residues 281–343 (PYQSPAFAGG…PCSRIGHIFR (63 aa)) is catalytic subdomain B. Trp312 serves as a coordination point for substrate. Residue His340 coordinates Mn(2+). Substrate-binding residues include Arg343 and His346. The Ricin B-type lectin domain maps to 422–556 (VSPELRMHFD…SFQFALEMEG (135 aa)). N-linked (GlcNAc...) asparagine glycosylation is present at Asn501. Cys525 and Cys539 form a disulfide bridge.

The protein belongs to the glycosyltransferase 2 family. GalNAc-T subfamily. It depends on Mn(2+) as a cofactor. During embryonic stages 16-17, very weak expression in the midgut.

The protein resides in the golgi apparatus membrane. It catalyses the reaction L-seryl-[protein] + UDP-N-acetyl-alpha-D-galactosamine = a 3-O-[N-acetyl-alpha-D-galactosaminyl]-L-seryl-[protein] + UDP + H(+). The catalysed reaction is L-threonyl-[protein] + UDP-N-acetyl-alpha-D-galactosamine = a 3-O-[N-acetyl-alpha-D-galactosaminyl]-L-threonyl-[protein] + UDP + H(+). Its pathway is protein modification; protein glycosylation. May catalyze the initial reaction in O-linked oligosaccharide biosynthesis, the transfer of an N-acetyl-D-galactosamine residue to a serine or threonine residue on the protein receptor. The sequence is that of Putative polypeptide N-acetylgalactosaminyltransferase 13 (pgant13) from Drosophila melanogaster (Fruit fly).